Here is a 351-residue protein sequence, read N- to C-terminus: Protein-glutamate methylesterase/protein-glutamine glutaminase (351 aa).

In terms of domain architecture, Response regulatory spans 6–123 (RVLVVDDSPT…ARPFGDLADK (118 aa)). Asp57 carries the 4-aspartylphosphate modification. The CheB-type methylesterase domain maps to 154–346 (YRAGRKVVAI…EEILKLTTAR (193 aa)). Catalysis depends on residues Ser166, His192, and Asp288.

Belongs to the CheB family. Post-translationally, phosphorylated by CheA. Phosphorylation of the N-terminal regulatory domain activates the methylesterase activity.

It is found in the cytoplasm. The enzyme catalyses [protein]-L-glutamate 5-O-methyl ester + H2O = L-glutamyl-[protein] + methanol + H(+). The catalysed reaction is L-glutaminyl-[protein] + H2O = L-glutamyl-[protein] + NH4(+). Functionally, involved in chemotaxis. Part of a chemotaxis signal transduction system that modulates chemotaxis in response to various stimuli. Catalyzes the demethylation of specific methylglutamate residues introduced into the chemoreceptors (methyl-accepting chemotaxis proteins or MCP) by CheR. Also mediates the irreversible deamidation of specific glutamine residues to glutamic acid. The protein is Protein-glutamate methylesterase/protein-glutamine glutaminase of Agrobacterium fabrum (strain C58 / ATCC 33970) (Agrobacterium tumefaciens (strain C58)).